An 80-amino-acid polypeptide reads, in one-letter code: 14-3-3-like protein 1 (80 aa).

Belongs to the 14-3-3 family.

In Pseudotsuga menziesii (Douglas-fir), this protein is 14-3-3-like protein 1.